A 321-amino-acid chain; its full sequence is Malate dehydrogenase (321 aa).

Residues 11–16 (GSGNIG) and D35 each bind NAD(+). Substrate is bound by residues R84 and R90. NAD(+) contacts are provided by residues N97 and 120–122 (ITN). Positions 122 and 153 each coordinate substrate. H177 serves as the catalytic Proton acceptor.

It belongs to the LDH/MDH superfamily. MDH type 3 family.

The catalysed reaction is (S)-malate + NAD(+) = oxaloacetate + NADH + H(+). Catalyzes the reversible oxidation of malate to oxaloacetate. The chain is Malate dehydrogenase from Rickettsia peacockii (strain Rustic).